The chain runs to 651 residues: Acetyl-coenzyme A synthetase (651 aa).

CoA-binding positions include 191–194 (RGGK), T311, and N335. ATP-binding positions include 387 to 389 (GEP), 411 to 416 (DTWWQT), D500, and R515. S523 is a CoA binding site. R526 is a binding site for ATP. V537, H539, and V542 together coordinate Mg(2+). Residue R584 participates in CoA binding. K609 bears the N6-acetyllysine mark.

This sequence belongs to the ATP-dependent AMP-binding enzyme family. Mg(2+) serves as cofactor. Post-translationally, acetylated. Deacetylation by the SIR2-homolog deacetylase activates the enzyme.

The enzyme catalyses acetate + ATP + CoA = acetyl-CoA + AMP + diphosphate. Functionally, catalyzes the conversion of acetate into acetyl-CoA (AcCoA), an essential intermediate at the junction of anabolic and catabolic pathways. AcsA undergoes a two-step reaction. In the first half reaction, AcsA combines acetate with ATP to form acetyl-adenylate (AcAMP) intermediate. In the second half reaction, it can then transfer the acetyl group from AcAMP to the sulfhydryl group of CoA, forming the product AcCoA. The sequence is that of Acetyl-coenzyme A synthetase from Pseudomonas syringae pv. syringae (strain B728a).